The sequence spans 628 residues: MAKAVGIDLGTTNSVISVMEGGRPEVIVNAEGGRTTPSVVAYKGDERLVGQIARRQAALNPAATLFEVKRFIGRRWDEVKEEAARSPFKVKEGPGGSVRIEVNGQDLAPEQVSAEVLRKLVSDASAKLGQKITDAVITVPAYFDNSQREATKQAGEIAGLNVLRVINEPTAAALAYGLERKGNETVLVFDLGGGTFDVTILELGDGVFEVKSTAGDTHLGGADFDHRIVDWLAEEFNREHNFDLRKDKQALQRLIEAAEKAKIDLSNASESSISLPFITFDPETRTPMHLERTLSRAKFEELTADLLRRVRKPVEQALADAKLSASDIDEVILVGGSTRIPAVKRIVQDLVGKTPNESVNPDEAVALGAAVQAGIIQGDSALGDIVLVDVTPLTLGVEVKGGMIAPMITRNTTVPAKKTEIYTTAENNQPGVEINVLQGERPMASDNKSLGRFKLEGIPPMRAGQAQIEVTFDIDANGILHVTAKEKTSGKEASIRIENTTTLDKSDVERMVREAEENAAADKLRREKVEKRNNLDSLRVQATQQLEENEGAAQDAKDALKAAADEAEEAVRSEDDARIESAQKRLEEELRTFMTAQQAAGQGQPQGAQAQGTKADDDVIDADFKAAE.

Residue T195 is modified to Phosphothreonine; by autocatalysis. The interval Q545–E628 is disordered. The segment covering D555 to R591 has biased composition (basic and acidic residues). A compositionally biased stretch (low complexity) spans A596–G612. The span at K614–E628 shows a compositional bias: basic and acidic residues.

The protein belongs to the heat shock protein 70 family.

In terms of biological role, acts as a chaperone. The sequence is that of Chaperone protein DnaK from Deinococcus deserti (strain DSM 17065 / CIP 109153 / LMG 22923 / VCD115).